A 424-amino-acid polypeptide reads, in one-letter code: Serine--tRNA ligase (424 aa).

233–235 (TAE) serves as a coordination point for L-serine. ATP-binding positions include 264–266 (RRE) and valine 280. Glutamate 287 is a binding site for L-serine. 351-354 (EISS) contributes to the ATP binding site. Serine 386 lines the L-serine pocket.

The protein belongs to the class-II aminoacyl-tRNA synthetase family. Type-1 seryl-tRNA synthetase subfamily. Homodimer. The tRNA molecule binds across the dimer.

The protein localises to the cytoplasm. The enzyme catalyses tRNA(Ser) + L-serine + ATP = L-seryl-tRNA(Ser) + AMP + diphosphate + H(+). It catalyses the reaction tRNA(Sec) + L-serine + ATP = L-seryl-tRNA(Sec) + AMP + diphosphate + H(+). Its pathway is aminoacyl-tRNA biosynthesis; selenocysteinyl-tRNA(Sec) biosynthesis; L-seryl-tRNA(Sec) from L-serine and tRNA(Sec): step 1/1. Functionally, catalyzes the attachment of serine to tRNA(Ser). Is also able to aminoacylate tRNA(Sec) with serine, to form the misacylated tRNA L-seryl-tRNA(Sec), which will be further converted into selenocysteinyl-tRNA(Sec). The sequence is that of Serine--tRNA ligase from Kosmotoga olearia (strain ATCC BAA-1733 / DSM 21960 / TBF 19.5.1).